Consider the following 382-residue polypeptide: N-acetylglucosamine-6-phosphate deacetylase (382 aa).

Glu-131 contributes to the a divalent metal cation binding site. Position 142–143 (142–143 (TH)) interacts with substrate. A divalent metal cation is bound by residues His-195 and His-216. Residues 219 to 220 (NA), Arg-227, and 248 to 251 (DGLH) contribute to the substrate site. Asp-273 (proton donor/acceptor) is an active-site residue. 306 to 308 (LSG) serves as a coordination point for substrate.

This sequence belongs to the metallo-dependent hydrolases superfamily. NagA family. As to quaternary structure, homotetramer. Requires a divalent metal cation as cofactor.

The catalysed reaction is N-acetyl-D-glucosamine 6-phosphate + H2O = D-glucosamine 6-phosphate + acetate. Its pathway is amino-sugar metabolism; N-acetylneuraminate degradation; D-fructose 6-phosphate from N-acetylneuraminate: step 4/5. Functionally, involved in the first committed step in the biosynthesis of amino-sugar-nucleotides. Catalyzes the hydrolysis of the N-acetyl group of N-acetylglucosamine-6-phosphate (GlcNAc-6-P) to yield glucosamine 6-phosphate and acetate. Can probably also catalyze the deacetylation of N-acetyl-D-galactosamine 6-phosphate to D-galactosamine 6-phosphate. This is N-acetylglucosamine-6-phosphate deacetylase (nagA) from Escherichia coli O157:H7.